Consider the following 75-residue polypeptide: Small ribosomal subunit protein bS18 (75 aa).

This sequence belongs to the bacterial ribosomal protein bS18 family. Part of the 30S ribosomal subunit. Forms a tight heterodimer with protein bS6.

In terms of biological role, binds as a heterodimer with protein bS6 to the central domain of the 16S rRNA, where it helps stabilize the platform of the 30S subunit. The polypeptide is Small ribosomal subunit protein bS18 (Chromobacterium violaceum (strain ATCC 12472 / DSM 30191 / JCM 1249 / CCUG 213 / NBRC 12614 / NCIMB 9131 / NCTC 9757 / MK)).